The chain runs to 667 residues: DNA ligase (667 aa).

NAD(+) is bound by residues 32–36 and 80–81; these read DKDYD and SL. The active-site N6-AMP-lysine intermediate is K121. 3 residues coordinate NAD(+): R143, E178, and K314. Residues C407, C410, C423, and C429 each coordinate Zn(2+). The BRCT domain occupies 587-667; it reads IVESIFKDKT…EFEKMLGRES (81 aa).

This sequence belongs to the NAD-dependent DNA ligase family. LigA subfamily. Mg(2+) is required as a cofactor. Requires Mn(2+) as cofactor.

It carries out the reaction NAD(+) + (deoxyribonucleotide)n-3'-hydroxyl + 5'-phospho-(deoxyribonucleotide)m = (deoxyribonucleotide)n+m + AMP + beta-nicotinamide D-nucleotide.. In terms of biological role, DNA ligase that catalyzes the formation of phosphodiester linkages between 5'-phosphoryl and 3'-hydroxyl groups in double-stranded DNA using NAD as a coenzyme and as the energy source for the reaction. It is essential for DNA replication and repair of damaged DNA. This is DNA ligase from Clostridium botulinum (strain Eklund 17B / Type B).